We begin with the raw amino-acid sequence, 143 residues long: 3-hydroxyacyl-[acyl-carrier-protein] dehydratase FabZ (143 aa).

The active site involves H47.

The protein belongs to the thioester dehydratase family. FabZ subfamily.

It localises to the cytoplasm. The catalysed reaction is a (3R)-hydroxyacyl-[ACP] = a (2E)-enoyl-[ACP] + H2O. Involved in unsaturated fatty acids biosynthesis. Catalyzes the dehydration of short chain beta-hydroxyacyl-ACPs and long chain saturated and unsaturated beta-hydroxyacyl-ACPs. In Moorella thermoacetica (strain ATCC 39073 / JCM 9320), this protein is 3-hydroxyacyl-[acyl-carrier-protein] dehydratase FabZ.